A 309-amino-acid polypeptide reads, in one-letter code: Ribonuclease Z (309 aa).

Zn(2+)-binding residues include His-63, His-65, Asp-67, His-68, His-145, Asp-216, and His-274. The active-site Proton acceptor is the Asp-67.

The protein belongs to the RNase Z family. In terms of assembly, homodimer. Requires Zn(2+) as cofactor.

The catalysed reaction is Endonucleolytic cleavage of RNA, removing extra 3' nucleotides from tRNA precursor, generating 3' termini of tRNAs. A 3'-hydroxy group is left at the tRNA terminus and a 5'-phosphoryl group is left at the trailer molecule.. In terms of biological role, zinc phosphodiesterase, which displays some tRNA 3'-processing endonuclease activity. Probably involved in tRNA maturation, by removing a 3'-trailer from precursor tRNA. The protein is Ribonuclease Z of Streptococcus uberis (strain ATCC BAA-854 / 0140J).